The primary structure comprises 240 residues: Proline-rich antigen homolog (240 aa).

Pro residues-rich tracts occupy residues 1–31 (MTEQ…PAAP) and 38–78 (APPP…PPGP). The tract at residues 1–78 (MTEQPPPGGS…GGYAPPPPGP (78 aa)) is disordered. One can recognise an RDD domain in the interval 89–233 (TPWITRVLAA…KRQTLADKIM (145 aa)). Helical transmembrane passes span 98–118 (AFID…IMLV), 142–162 (SMIG…YLVW), and 203–223 (LAHF…LWDA).

This sequence belongs to the mycobacterial Pra family.

Its subcellular location is the cell membrane. This Mycobacterium tuberculosis (strain CDC 1551 / Oshkosh) protein is Proline-rich antigen homolog.